The chain runs to 231 residues: Modulator of macroautophagy TMEM150B-B (231 aa).

Position 1 (Met-1) is a topological domain, cytoplasmic. A helical membrane pass occupies residues 2–22 (WAWALLPICLTVWATGGIWIV). Topologically, residues 23 to 50 (YAMSVSNGSVNLSDGFPYISVSGTYPPQ) are extracellular. N-linked (GlcNAc...) asparagine glycans are attached at residues Asn-29 and Asn-33. The chain crosses the membrane as a helical span at residues 51 to 71 (SCVFGQVLNVGAMLAVWISVI). Over 72–83 (RFQQIRDYNCHS) the chain is Cytoplasmic. A helical membrane pass occupies residues 84–104 (VLNSVSLATGILCALGTSIVG). Residues 105–115 (NFQQSNQLQTH) lie on the Extracellular side of the membrane. The helical transmembrane segment at 116 to 136 (LAGAFLAFIIGNVYFWMQTAL) threads the bilayer. At 137-150 (TYMVKPKHGGCYIG) the chain is on the cytoplasmic side. A helical transmembrane segment spans residues 151–171 (PIRFCLSIACTALIVAMAVFL). Residues 172 to 183 (KMNMKSVSAICE) are Extracellular-facing. A helical membrane pass occupies residues 184 to 204 (WIVAMILFLLYGLFAVDFWHL). Residues 205 to 231 (DGHFFHVKKRRTVIPNEMEVSTVTLSI) are Cytoplasmic-facing.

Belongs to the DRAM/TMEM150 family.

The protein localises to the cell membrane. It localises to the endosome membrane. The protein resides in the cytoplasmic vesicle. Its subcellular location is the autophagosome membrane. In terms of biological role, modulator of macroautophagy that causes accumulation of autophagosomes under basal conditions and enhances autophagic flux. Represses cell death and promotes long-term clonogenic survival of cells grown in the absence of glucose in a macroautophagy-independent manner. May have some role in extracellular matrix engulfment or growth factor receptor recycling, both of which can modulate cell survival. This is Modulator of macroautophagy TMEM150B-B from Xenopus laevis (African clawed frog).